Reading from the N-terminus, the 581-residue chain is Leucine-rich repeat-containing protein 15 (581 aa).

Positions 1–21 (MPLKHYLLLLVGCQAWGAGLA) are cleaved as a signal peptide. Residues 22–53 (YHGCPSECTCSRASQVECTGARIVAVPTPLPW) form the LRRNT domain. Over 22-538 (YHGCPSECTC…VWGMTQAQSG (517 aa)) the chain is Extracellular. LRR repeat units follow at residues 54-75 (NAMSLQILNTHITELNESPFLN), 78-99 (ALIALRIEKNELSRITPGAFRN), 102-123 (SLRYLSLANNKLQVLPIGLFQG), 126-147 (SLESLLLSSNQLLQIQPAHFSQ), 150-171 (NLKELQLHGNHLEYIPDGAFDH), 174-195 (GLTKLNLGKNSLTHISPRVFQH), 198-219 (NLQVLRLYENRLTDIPMGTFDG), 222-243 (NLQELALQQNQIGLLSPGLFHN), 246-267 (NLQRLYLSNNHISQLPPSVFMQ), 270-291 (QLNRLTLFGNSLKELSPGIFGP), 294-315 (NLRELWLYDNHISSLPDNVFSN), 318-339 (QLQVLILSRNQISFISPGAFNG), 342-363 (ELRELSLHTNALQDLDGNVFRM), 366-387 (NLQNISLQNNRLRQLPGNIFAN), and 390-411 (GLMAIQLQNNQLENLPLGIFDH). N-linked (GlcNAc...) asparagine glycosylation is present at Asn-75. N-linked (GlcNAc...) asparagine glycosylation occurs at Asn-369. Residues 423-475 (NPWRCDSDILPLRNWLLLNQPRLGTDTVPVCFSPANVRGQSLIIINVNVAVPS) enclose the LRRCT domain. The segment at 489–509 (WYPDTPSYPDTTSVSSTTELT) is disordered. Residues 499-509 (TTSVSSTTELT) show a composition bias toward low complexity. A helical membrane pass occupies residues 539-559 (LAIAAIVIGIVALACSLAACV). At 560–581 (GCCCCKKRSQAVLMQMKAPNEC) the chain is on the cytoplasmic side.

As to quaternary structure, (Microbial infection) Interacts with human coronavirus SARS-CoV-2 spike protein (via RBD domain); the interaction is direct and sequesters virions at the cell surface. In terms of assembly, (Microbial infection) Interacts with human coronavirus SARS-CoV-2 spike protein (via RBD domain); the interaction is direct. As to expression, expressed in brain and placenta. Expressed in lung fibroblasts. Expressed in chodrocytes.

The protein resides in the cell membrane. (Microbial infection) Modulates the ability of SARS-CoV-2 to infect host cells through interaction with the spike protein. Does not act as a SARS-CoV-2 entry receptor but sequesters virions and antagonizes in trans SARS-CoV-2 infection of ACE2(+) cells when expressed on nearby cells. In Homo sapiens (Human), this protein is Leucine-rich repeat-containing protein 15 (LRRC15).